A 425-amino-acid polypeptide reads, in one-letter code: Metalloprotease AF_0655 (425 aa).

Belongs to the peptidase U62 family.

Functionally, probable metalloprotease. This Archaeoglobus fulgidus (strain ATCC 49558 / DSM 4304 / JCM 9628 / NBRC 100126 / VC-16) protein is Metalloprotease AF_0655.